The primary structure comprises 161 residues: Bacterioferritin (161 aa).

The region spanning 1–145 (MKGDAKVIEF…TQISLYDRLG (145 aa)) is the Ferritin-like diiron domain. Positions 18 and 51 each coordinate Fe cation. Residue Met-52 participates in heme b binding. 4 residues coordinate Fe cation: His-54, Glu-94, Glu-127, and His-130.

The protein belongs to the bacterioferritin family. Homooligomer of 24 subunits, arranged as 12 dimers, that are packed together to form an approximately spherical molecule with a central cavity, in which large amounts of iron can be deposited. Heme b serves as cofactor.

The catalysed reaction is 4 Fe(2+) + O2 + 4 H(+) = 4 Fe(3+) + 2 H2O. It carries out the reaction Fe(2+)(in) = Fe(2+)(out). Its function is as follows. Iron-storage protein, whose ferroxidase center binds Fe(2+), oxidizes it using dioxygen to Fe(3+), and participates in the subsequent Fe(3+) oxide mineral core formation within the central cavity of the BFR protein shell. This chain is Bacterioferritin (bfr), found in Rhodobacter capsulatus (Rhodopseudomonas capsulata).